A 963-amino-acid chain; its full sequence is Spliceosome associated factor 3, U4/U6 recycling protein (963 aa).

Over residues 1–11 (MATAAETSASE) the composition is skewed to low complexity. Disordered regions lie at residues 1–36 (MATAAETSASEPEAESKAGPKADGEEDEVKAARTRR) and 50–90 (TMGP…YDEE). An N-acetylalanine modification is found at A2. Positions 2–351 (ATAAETSASE…LVPDLWIRYS (350 aa)) are mediates interaction with PRPF3. Phosphoserine is present on residues S10 and S16. The span at 14-23 (AESKAGPKAD) shows a compositional bias: basic and acidic residues. Residues 21–46 (KADGEEDEVKAARTRRKVLSRAVAAA) are a coiled coil. Acidic residues predominate over residues 57-69 (QQEEGVSESDGDE). The stretch at 82 to 110 (EYEWEYDEEEEKNQLEIERLEEQLSINVY) forms a coiled coil. HAT repeat units follow at residues 126–158 (GELTKVRMARQKMSEIFPLTEELWLEWLHDEIS), 164–195 (LDREHVYDLFEKAVKDYICPNIWLEYGQYSVG), 201–237 (GGLEKVRSVFERALSSVGLHMTKGLALWEAYREFESA), 242–275 (ARLEKVHSLFRRQLAIPLYDMEATFAEYEEWSED), 324–356 (GDPARIQLIFERALVENCLVPDLWIRYSQYLDR), 359–391 (KVKDLVLSVHNRAIRNCPWTVALWSRYLLAMER), 394–430 (VDHQVISVTFEKALNAGFIQATDYVEIWQAYLDYLRR), and 487–520 (NNMQKARELWDSIMTRGNAKYANMWLEYYNLERA). At S215 the chain carries Phosphoserine. Residues 487–520 (NNMQKARELWDSIMTRGNAKYANMWLEYYNLERA) form a required for interaction with USP4 region. The interval 537-953 (CTSDYPEHVC…AATEAPKMSN (417 aa)) is necessary and sufficient for U6 snRNA binding. Residues 559–619 (LEDWDIAVQK…ALKKKKKIRG (61 aa)) adopt a coiled-coil conformation. Positions 590 to 601 (LVQQEEEKAEQR) are enriched in basic and acidic residues. A disordered region spans residues 590–694 (LVQQEEEKAE…AASLKRDMPK (105 aa)). Residues 600 to 670 (QRKRARAEKK…EVAAGPAGKC (71 aa)) form a required for nuclear localization region. A Nuclear localization signal motif is present at residues 601 to 608 (RKRARAEK). Over residues 602–617 (KRARAEKKALKKKKKI) the composition is skewed to basic residues. The span at 626–639 (DEDDEKEWGDDEEE) shows a compositional bias: acidic residues. At S650 the chain carries Phosphoserine. Phosphothreonine is present on T657. The segment covering 677-694 (PPSKQKEKAASLKRDMPK) has biased composition (basic and acidic residues). An RRM 1 domain is found at 704–782 (ITVFVSNLPY…RPMFVSPCVD (79 aa)). Phosphoserine is present on residues S769, S795, and S852. One can recognise an RRM 2 domain in the interval 801 to 878 (HKLFISGLPF…NIIKVAISNP (78 aa)). Residues 878 to 898 (PPQRKVPEKPETRKAPGGPML) are disordered. The span at 882 to 891 (KVPEKPETRK) shows a compositional bias: basic and acidic residues. At R906 the chain carries Omega-N-methylarginine. The interval 920–948 (LQRPSAAAPQAENGPAAAPAVAAPAATEA) is disordered. Low complexity predominate over residues 925 to 948 (AAAPQAENGPAAAPAVAAPAATEA).

Component of the 7SK snRNP complex at least composed of P-TEFb (composed of CDK9 and CCNT1/cyclin-T1), HEXIM1, HEXIM2, BCDIN3, SART3 proteins and 7SK and U6 snRNAs. Interacts with AGO1 and AGO2. Interacts with PRPF3 and USP4; the interaction with PRPF3 is direct and recruits USP4 to its substrate PRPF3. Interacts with USP15; the interaction is direct. Interacts with HIV-1 Tat. As to expression, ubiquitously expressed.

The protein localises to the nucleus. It is found in the nucleoplasm. The protein resides in the cajal body. It localises to the nucleus speckle. Its subcellular location is the cytoplasm. In terms of biological role, U6 snRNP-binding protein that functions as a recycling factor of the splicing machinery. Promotes the initial reassembly of U4 and U6 snRNPs following their ejection from the spliceosome during its maturation. Also binds U6atac snRNPs and may function as a recycling factor for U4atac/U6atac spliceosomal snRNP, an initial step in the assembly of U12-type spliceosomal complex. The U12-type spliceosomal complex plays a role in the splicing of introns with non-canonical splice sites. May also function as a substrate-targeting factor for deubiquitinases like USP4 and USP15. Recruits USP4 to ubiquitinated PRPF3 within the U4/U5/U6 tri-snRNP complex, promoting PRPF3 deubiquitination and thereby regulating the spliceosome U4/U5/U6 tri-snRNP spliceosomal complex disassembly. May also recruit the deubiquitinase USP15 to histone H2B and mediate histone deubiquitination, thereby regulating gene expression and/or DNA repair. May play a role in hematopoiesis probably through transcription regulation of specific genes including MYC. Its function is as follows. Regulates Tat transactivation activity through direct interaction. May be a cellular factor for HIV-1 gene expression and viral replication. The sequence is that of Spliceosome associated factor 3, U4/U6 recycling protein from Homo sapiens (Human).